The following is a 473-amino-acid chain: MKFLNTFSLLSLAIIGSKAMKNISSKELVKDLTIGWSLGNTLDATCFETLDYNKNQIASETCWGNVKTTQELYYKLSDLGFNTFRIPTTWSGHFGNAPDYKINDQWMKRVHEIVDYAINTGGYAILNIHHETWNHAFQKNLESAKKILVAIWKQIAAEFADYDEHLIFEGMNEPRKVGDPAEWNGGDYEGWNFVNEMNDLFVKTIRATGGNNALRHLMIPTYAACINDGAINNFKFPSGDDKVIVSLHSYSPYNFALNNGAGAISNFYDGSEIDWAMNTINSKFISRGIPVIIGEFGAMNRNNEDDRERWAEYYIKKATSIGVPCVIWDNGYFEGEGERFGLINRSTLQVVYPKLVNGLIKGLGNSIKTRTTIRRTTTTTTSQSQPTNNDSCFSVNLGYSCCNGCEVEYTDSDGEWGVENGNWCGIKSSCSNTSRICWSEKLGYPCCQNTSSVVYTDNDGKWGVENGNWCGIY.

An N-terminal signal peptide occupies residues M1 to S17. Residues K18 to I367 form a catalytic region. The active-site Proton donor is the E173. E295 serves as the catalytic Nucleophile. The segment at N365–T387 is linker. CBM10 domains lie at S391–K427 and I436–Y473.

The protein belongs to the glycosyl hydrolase 5 (cellulase A) family.

The catalysed reaction is Endohydrolysis of (1-&gt;4)-beta-D-glucosidic linkages in cellulose, lichenin and cereal beta-D-glucans.. Rate of hydrolysis of cellulo-oligosaccharides increased with increasing chain length from cellotriose to cellopentaose. The chain is Endoglucanase B (CELB) from Neocallimastix patriciarum (Rumen fungus).